Here is a 303-residue protein sequence, read N- to C-terminus: ADP-ribosyl cyclase/cyclic ADP-ribose hydrolase 1 (303 aa).

At 1–21 (MANYEFSQVSEDRPGCRLTRK) the chain is on the cytoplasmic side. A helical; Signal-anchor for type II membrane protein membrane pass occupies residues 22–44 (AQIGLGVGLLLLVALVVVVVIVL). The Extracellular segment spans residues 45–303 (WPRSPLVWKG…PEHPSCRLNV (259 aa)). 3 cysteine pairs are disulfide-bonded: cysteine 69–cysteine 85, cysteine 102–cysteine 183, and cysteine 163–cysteine 176. N-linked (GlcNAc...) asparagine glycosylation is present at asparagine 103. Residue cysteine 122 is part of the active site. Asparagine 123 carries an N-linked (GlcNAc...) asparagine glycan. Cysteine 204 is an active-site residue. 2 N-linked (GlcNAc...) asparagine glycosylation sites follow: asparagine 212 and asparagine 222. Intrachain disulfides connect cysteine 257–cysteine 278 and cysteine 290–cysteine 299.

Belongs to the ADP-ribosyl cyclase family. As to quaternary structure, homodimer. In terms of tissue distribution, spleen, liver, heart, thymus, thyroid gland, ileum, colon, cerebellum, salivary gland, adrenal gland, jejunum, islets of Langerhans and osteoclasts.

It is found in the cell membrane. It catalyses the reaction NAD(+) = cyclic ADP-beta-D-ribose + nicotinamide + H(+). The enzyme catalyses nicotinate + NADP(+) = nicotinate-adenine dinucleotide phosphate + nicotinamide. The catalysed reaction is NAD(+) + H2O = ADP-D-ribose + nicotinamide + H(+). With respect to regulation, both NAADP and cADPR synthesis are inhibited by nicotinic acid. Functionally, synthesizes the second messengers cyclic ADP-ribose and nicotinate-adenine dinucleotide phosphate, the former a second messenger for glucose-induced insulin secretion, the latter a Ca(2+) mobilizer. Also has cADPR hydrolase activity. In terms of biological role, regulates osteoclastic bone resorption, probably via production of cyclic ADP-ribose and triggering of a cytosolic calcium ion signal through ryanodine receptor activation. The chain is ADP-ribosyl cyclase/cyclic ADP-ribose hydrolase 1 (Cd38) from Rattus norvegicus (Rat).